Consider the following 421-residue polypeptide: MFSLHFIDEAFNEVYAGNGGHGIVAFRREKYVPFGGPAGGNGGNGGSVIFVGEQGETTLLKLKYQKHLKASHGFNGKNKSQNGANAPHLYVKVPLGTVFFTMDNHFLGEILHHQETLVIAKGGKGGRGNKALANFKNPAPSYAEKGDLGEHFKIKIQLKVLADVGLLGFPSVGKSSLISLISKAQPKIDSYPFTTLFPHLGVVLIDGFSFVIADLPGLIPNAHLGQGLGIQFLKHIERCRVLVHLISMQSLDPYKDYVALNKELQQYNSTLVEKKQIIVANKMDLPDAEKKLKDLQKKLSDVTIIPLSLINFYNIEKLKYAIKNLLQKTPFVIPKHDNFKVYDLNSETQTFTINKNKEGVFVVSGRQVEIFSHRTDFNNEAAVKRFNYLLKKIGIEEALKQKGAKLGDQVKICNYLFDFVI.

One can recognise an Obg domain in the interval 4–161; the sequence is LHFIDEAFNE…FKIKIQLKVL (158 aa). Residues 162-327 form the OBG-type G domain; that stretch reads ADVGLLGFPS…LKYAIKNLLQ (166 aa). GTP contacts are provided by residues 168–175, 193–197, 214–217, 281–284, and 308–310; these read GFPSVGKS, FTTLF, DLPG, NKMD, and SLI. Positions 175 and 195 each coordinate Mg(2+). The OCT domain maps to 343–421; that stretch reads DLNSETQTFT…ICNYLFDFVI (79 aa).

This sequence belongs to the TRAFAC class OBG-HflX-like GTPase superfamily. OBG GTPase family. Monomer. Mg(2+) serves as cofactor.

The protein resides in the cytoplasm. In terms of biological role, an essential GTPase which binds GTP, GDP and possibly (p)ppGpp with moderate affinity, with high nucleotide exchange rates and a fairly low GTP hydrolysis rate. Plays a role in control of the cell cycle, stress response, ribosome biogenesis and in those bacteria that undergo differentiation, in morphogenesis control. The sequence is that of GTPase Obg from Phytoplasma australiense.